A 227-amino-acid chain; its full sequence is Cytochrome c oxidase subunit 2 (227 aa).

The Mitochondrial intermembrane portion of the chain corresponds to 1–14; the sequence is MAYPFQLGLQDATS. A helical transmembrane segment spans residues 15-45; sequence PIMEELMNFHDHTLMIVFLISSLVLYIISLM. The Mitochondrial matrix segment spans residues 46–59; it reads LTTKLTHTSTMDAQ. Residues 60-87 traverse the membrane as a helical segment; sequence EVETIWTILPAAILILIALPSLRILYMM. The Mitochondrial intermembrane portion of the chain corresponds to 88–227; the sequence is DEINNPVLTV…YFENWSASMI (140 aa). Residues H161, C196, E198, C200, H204, and M207 each coordinate Cu cation. E198 is a Mg(2+) binding site. The residue at position 218 (Y218) is a Phosphotyrosine.

The protein belongs to the cytochrome c oxidase subunit 2 family. In terms of assembly, component of the cytochrome c oxidase (complex IV, CIV), a multisubunit enzyme composed of 14 subunits. The complex is composed of a catalytic core of 3 subunits MT-CO1, MT-CO2 and MT-CO3, encoded in the mitochondrial DNA, and 11 supernumerary subunits COX4I, COX5A, COX5B, COX6A, COX6B, COX6C, COX7A, COX7B, COX7C, COX8 and NDUFA4, which are encoded in the nuclear genome. The complex exists as a monomer or a dimer and forms supercomplexes (SCs) in the inner mitochondrial membrane with NADH-ubiquinone oxidoreductase (complex I, CI) and ubiquinol-cytochrome c oxidoreductase (cytochrome b-c1 complex, complex III, CIII), resulting in different assemblies (supercomplex SCI(1)III(2)IV(1) and megacomplex MCI(2)III(2)IV(2)). Found in a complex with TMEM177, COA6, COX18, COX20, SCO1 and SCO2. Interacts with TMEM177 in a COX20-dependent manner. Interacts with COX20. Interacts with COX16. It depends on Cu cation as a cofactor.

The protein resides in the mitochondrion inner membrane. The enzyme catalyses 4 Fe(II)-[cytochrome c] + O2 + 8 H(+)(in) = 4 Fe(III)-[cytochrome c] + 2 H2O + 4 H(+)(out). Its function is as follows. Component of the cytochrome c oxidase, the last enzyme in the mitochondrial electron transport chain which drives oxidative phosphorylation. The respiratory chain contains 3 multisubunit complexes succinate dehydrogenase (complex II, CII), ubiquinol-cytochrome c oxidoreductase (cytochrome b-c1 complex, complex III, CIII) and cytochrome c oxidase (complex IV, CIV), that cooperate to transfer electrons derived from NADH and succinate to molecular oxygen, creating an electrochemical gradient over the inner membrane that drives transmembrane transport and the ATP synthase. Cytochrome c oxidase is the component of the respiratory chain that catalyzes the reduction of oxygen to water. Electrons originating from reduced cytochrome c in the intermembrane space (IMS) are transferred via the dinuclear copper A center (CU(A)) of subunit 2 and heme A of subunit 1 to the active site in subunit 1, a binuclear center (BNC) formed by heme A3 and copper B (CU(B)). The BNC reduces molecular oxygen to 2 water molecules using 4 electrons from cytochrome c in the IMS and 4 protons from the mitochondrial matrix. This is Cytochrome c oxidase subunit 2 (MT-CO2) from Praomys tullbergi (Tullberg's soft-furred rat).